The primary structure comprises 69 residues: Cytochrome c oxidase copper chaperone (69 aa).

2 residues coordinate Cu cation: Cys-23 and Cys-24. Positions 23-65 (CCVCKPEKEERDTCILFNGQDSEKCKEFIEKYKECMKGYGFEV) constitute a CHCH domain. Short sequence motifs (cx9C motif) lie at residues 26–36 (CKPEKEERDTC) and 47–57 (CKEFIEKYKEC). Disulfide bonds link Cys-26–Cys-57 and Cys-36–Cys-47.

This sequence belongs to the COX17 family.

Its subcellular location is the mitochondrion intermembrane space. Its function is as follows. Copper chaperone for cytochrome c oxidase (COX). Binds two copper ions and deliver them to the Cu(A) site of COX. This chain is Cytochrome c oxidase copper chaperone (COX17), found in Saccharomyces cerevisiae (strain ATCC 204508 / S288c) (Baker's yeast).